We begin with the raw amino-acid sequence, 150 residues long: D-aminoacyl-tRNA deacylase (150 aa).

The short motif at 137 to 138 (GP) is the Gly-cisPro motif, important for rejection of L-amino acids element.

Belongs to the DTD family. In terms of assembly, homodimer.

It localises to the cytoplasm. The enzyme catalyses glycyl-tRNA(Ala) + H2O = tRNA(Ala) + glycine + H(+). The catalysed reaction is a D-aminoacyl-tRNA + H2O = a tRNA + a D-alpha-amino acid + H(+). Functionally, an aminoacyl-tRNA editing enzyme that deacylates mischarged D-aminoacyl-tRNAs. Also deacylates mischarged glycyl-tRNA(Ala), protecting cells against glycine mischarging by AlaRS. Acts via tRNA-based rather than protein-based catalysis; rejects L-amino acids rather than detecting D-amino acids in the active site. By recycling D-aminoacyl-tRNA to D-amino acids and free tRNA molecules, this enzyme counteracts the toxicity associated with the formation of D-aminoacyl-tRNA entities in vivo and helps enforce protein L-homochirality. The polypeptide is D-aminoacyl-tRNA deacylase (Heliobacterium modesticaldum (strain ATCC 51547 / Ice1)).